The following is a 148-amino-acid chain: UPF0178 protein BH16190 (148 aa).

This sequence belongs to the UPF0178 family.

The protein is UPF0178 protein BH16190 of Bartonella henselae (strain ATCC 49882 / DSM 28221 / CCUG 30454 / Houston 1) (Rochalimaea henselae).